Reading from the N-terminus, the 128-residue chain is Orchestin (128 aa).

The first 20 residues, 1-20, serve as a signal peptide directing secretion; the sequence is MNKVFIIGVCLFIVSQAVLA. The tract at residues 23 to 95 is disordered; it reads WDSDESSDER…DEDSDDSQES (73 aa). 2 stretches are compositionally biased toward basic and acidic residues: residues 30-49 and 56-81; these read DERL…KLVV and EDSN…RKLS. Acidic residues predominate over residues 84–93; that stretch reads TSDEDSDDSQ.

Post-translationally, phosphorylated on Ser and Tyr residues. Calcium-binding activity is dependent on serine phosphorylation but not on tyrosine phosphorylation. As to expression, posterior caeca epithelium of the gut.

The protein localises to the secreted. Its function is as follows. Plays a role in cuticle calcification. May induce precipitation of the calcium stored in the posterior caeca as calcium carbonate. The protein is Orchestin of Cryptorchestia cavimana (Amphipod).